The sequence spans 329 residues: Glycerol-3-phosphate dehydrogenase [NAD(P)+] (329 aa).

Positions 11 and 101 each coordinate NADPH. Lys101, Gly132, and Ser134 together coordinate sn-glycerol 3-phosphate. Ala136 provides a ligand contact to NADPH. Sn-glycerol 3-phosphate contacts are provided by Lys188, Asp241, Ser251, Arg252, and Asn253. The active-site Proton acceptor is Lys188. Arg252 is a binding site for NADPH. Residue Glu278 participates in NADPH binding.

The protein belongs to the NAD-dependent glycerol-3-phosphate dehydrogenase family.

The protein localises to the cytoplasm. It carries out the reaction sn-glycerol 3-phosphate + NAD(+) = dihydroxyacetone phosphate + NADH + H(+). The enzyme catalyses sn-glycerol 3-phosphate + NADP(+) = dihydroxyacetone phosphate + NADPH + H(+). Its pathway is membrane lipid metabolism; glycerophospholipid metabolism. In terms of biological role, catalyzes the reduction of the glycolytic intermediate dihydroxyacetone phosphate (DHAP) to sn-glycerol 3-phosphate (G3P), the key precursor for phospholipid synthesis. The sequence is that of Glycerol-3-phosphate dehydrogenase [NAD(P)+] from Onion yellows phytoplasma (strain OY-M).